A 384-amino-acid polypeptide reads, in one-letter code: Bacterial ceramide synthase (384 aa).

The protein resides in the cytoplasm. It carries out the reaction 3-oxosphinganine + a fatty acyl-CoA = N-acyl-3-oxosphinganine + CoA + H(+). The enzyme catalyses 3-oxosphinganine + tetradecanoyl-CoA = N-tetradecanoyl-3-oxosphinganine + CoA + H(+). It catalyses the reaction 3-oxosphinganine + hexadecanoyl-CoA = N-hexadecanoyl-3-oxosphinganine + CoA + H(+). The catalysed reaction is 3-oxosphinganine + (9Z)-hexadecenoyl-CoA = N-(9Z-hexadecenoyl)-3-oxosphinganine + CoA + H(+). It carries out the reaction 3-oxosphinganine + octanoyl-CoA = N-octanoyl-3-oxosphinganine + CoA + H(+). The enzyme catalyses 3-oxosphinganine + decanoyl-CoA = N-decanoyl-3-oxosphinganine + CoA + H(+). It catalyses the reaction 3-oxosphinganine + dodecanoyl-CoA = N-dodecanoyl-3-oxosphinganine + CoA + H(+). The catalysed reaction is 3-oxosphinganine + octadecanoyl-CoA = N-octadecanoyl-3-oxosphinganine + CoA + H(+). It carries out the reaction 3-oxosphinganine + eicosanoyl-CoA = N-eicosanoyl-3-oxosphinganine + CoA + H(+). The enzyme catalyses 3-oxosphinganine + docosanoyl-CoA = N-docosanoyl-3-ketodihydrosphingosine + CoA + H(+). It catalyses the reaction 3-oxosphinganine + tetracosanoyl-CoA = N-tetracosanoyl-3-oxosphinganine + CoA + H(+). It participates in lipid metabolism; sphingolipid metabolism. Functionally, involved in de novo bacterial ceramide synthesis. Catalyzes the condensation of 3-oxosphinganine with an acyl-CoA to generate oxidized ceramides. Can use acyl-CoA substrates ranging from C8 to C24, with highest in vitro activity with C14 and very little activity with acyl-CoA thioesters of 18 carbons or longer. May have a preference for monounsaturated acyl-CoA substrates, as it has a threefold greater preference for C16:1-CoA over C16:0-CoA as a substrate in vitro. The sequence is that of Bacterial ceramide synthase from Caulobacter vibrioides (strain NA1000 / CB15N) (Caulobacter crescentus).